The following is a 130-amino-acid chain: Con-Ins G2 (130 aa).

Residues 1–24 (MTTSSYFLLVALGLLLYVRQSFST) form the signal peptide. 4 cysteine pairs are disulfide-bonded: C29-C100, C41-C103, C53-C116, and C102-C107. At P34 the chain carries 4-hydroxyproline; partial. The segment at 54-74 (EEEEARRGGTNDGGKKRRRAS) is disordered. Positions 59 to 92 (RRGGTNDGGKKRRRASPLWKRRRFLSMLKARAKR) are cleaved as a propeptide — c peptide. 4-carboxyglutamate; partial is present on E111.

The protein belongs to the insulin family. As to quaternary structure, heterodimer of A and B chains; disulfide-linked. As to expression, expressed by the venom gland.

It is found in the secreted. Functionally, this venom insulin, from a fish-hunting cone snail, facilitates prey capture by rapidly inducing hypoglycemic shock. Intraperitoneal injection of this peptide into zebrafish lowers blood glucose with the same potency than human insulin. In vivo, when applied to water, this peptide reduces overall locomotor activity of zebrafish larvae, observed as a significant decrease in the percentage of time spent swimming and movement frequency. The sequence is that of Con-Ins G2 from Conus geographus (Geography cone).